The sequence spans 215 residues: Ras-related protein Rab-42 (215 aa).

Gly19, Gly21, Lys22, Thr23, and Thr44 together coordinate GTP. 3 residues coordinate Mg(2+): Thr23, Thr44, and Asp68. GTP is bound by residues Gly71, Lys128, Asp130, Ala157, and Lys158. Residues 196-215 (HRSPNPRSSSRKQDSGTCQC) form a disordered region. S-geranylgeranyl cysteine attachment occurs at residues Cys213 and Cys215.

The protein belongs to the small GTPase superfamily. Rab family. The cofactor is Mg(2+).

It is found in the membrane. The enzyme catalyses GTP + H2O = GDP + phosphate + H(+). With respect to regulation, regulated by guanine nucleotide exchange factors (GEFs) which promote the exchange of bound GDP for free GTP. Regulated by GTPase activating proteins (GAPs) which increase the GTP hydrolysis activity. Inhibited by GDP dissociation inhibitors (GDIs). Functionally, the small GTPases Rab are key regulators of intracellular membrane trafficking, from the formation of transport vesicles to their fusion with membranes. Rabs cycle between an inactive GDP-bound form and an active GTP-bound form that is able to recruit to membranes different sets of downstream effectors directly responsible for vesicle formation, movement, tethering and fusion. The physiological function of RAB42 remains undefined. This Mus musculus (Mouse) protein is Ras-related protein Rab-42.